Reading from the N-terminus, the 583-residue chain is Phosphoglucomutase, cytoplasmic 1 (583 aa).

Arg-25 and Ser-124 together coordinate alpha-D-glucose 1,6-bisphosphate. The Phosphoserine intermediate role is filled by Ser-124. Positions 124, 300, 302, and 304 each coordinate Mg(2+). Ser-124 carries the post-translational modification Phosphoserine. Alpha-D-glucose 1,6-bisphosphate-binding residues include Asp-304, Arg-305, Thr-368, Glu-387, Ser-389, and Lys-400.

It belongs to the phosphohexose mutase family. In terms of assembly, monomer. It depends on Mg(2+) as a cofactor. In terms of processing, autophosphorylated. Mostly expressed in roots and coleoptiles, and, to a lower extent, in leaves, pollen and developing seeds.

The protein localises to the cytoplasm. The catalysed reaction is alpha-D-glucose 1-phosphate = alpha-D-glucose 6-phosphate. It catalyses the reaction O-phospho-L-seryl-[protein] + alpha-D-glucose 1-phosphate = alpha-D-glucose 1,6-bisphosphate + L-seryl-[protein]. The enzyme catalyses alpha-D-glucose 1,6-bisphosphate + L-seryl-[protein] = O-phospho-L-seryl-[protein] + alpha-D-glucose 6-phosphate. Its function is as follows. Catalyzes the reversible isomerization of alpha-D-glucose 1-phosphate to alpha-D-glucose 6-phosphate. The mechanism proceeds via the intermediate compound alpha-D-glucose 1,6-bisphosphate. This enzyme participates in both the breakdown and synthesis of glucose. The protein is Phosphoglucomutase, cytoplasmic 1 of Zea mays (Maize).